Consider the following 1531-residue polypeptide: Protein turtle (1531 aa).

Over 1 to 858 the chain is Extracellular; sequence MGVCADLGSH…PARVKHKAIT (858 aa). The segment at 19–44 is disordered; that stretch reads QHNTEKSKEQQQQSQPLEIPEQRASK. Ig-like C2-type domains are found at residues 132–243, 253–340, 344–436, 440–529, and 536–624; these read PEDA…KNGT, PRFS…ARVI, GAVI…AYLS, PAKV…GVMD, and PAFT…MAVT. Cystine bridges form between cysteine 150/cysteine 227, cysteine 275/cysteine 324, cysteine 366/cysteine 419, cysteine 462/cysteine 513, and cysteine 558/cysteine 611. Fibronectin type-III domains lie at 632-728 and 760-851; these read QPHA…TLED and PPRN…VPAR. A helical transmembrane segment spans residues 859–879; it reads AGVVGGILFFIVAIILSVCAV. The Cytoplasmic portion of the chain corresponds to 880 to 1531; the sequence is KICNKRKRRK…QAMQQMESVC (652 aa). Disordered stretches follow at residues 1248-1269 and 1318-1395; these read EETR…VPLQ and NLNL…SYPR. Over residues 1333–1349 the composition is skewed to low complexity; sequence SPESRSSSSGFGSKNTS. Residues 1380–1389 show a composition bias toward polar residues; sequence QQAQGQTPHG.

This sequence belongs to the immunoglobulin superfamily. Turtle family. In terms of assembly, interacts with bdl. Exclusively expressed in the central nervous system.

It is found in the membrane. In terms of biological role, essential protein that plays a role in the establishment of coordinated motor control. In the developing eye, involved in axonal targeting of the R7 photoreceptor. This Drosophila melanogaster (Fruit fly) protein is Protein turtle (tutl).